Reading from the N-terminus, the 217-residue chain is Adenylate kinase (217 aa).

10 to 15 is an ATP binding site; sequence GAGKGT. Residues 30-59 are NMP; the sequence is STGDMFRAAIKAGTALGMKAKEYMDAGSLV. AMP contacts are provided by residues T31, R36, 57–59, 85–88, and Q92; these read SLV and GFPR. Residues 126-163 form an LID region; the sequence is GRRICRQCGGTYHMVFNPPAAEAVCDKCGGELYQRSDD. An ATP-binding site is contributed by R127. Zn(2+) contacts are provided by C130 and C133. An ATP-binding site is contributed by 136–137; that stretch reads TY. Residues C150 and C153 each coordinate Zn(2+). R160 and R171 together coordinate AMP. An ATP-binding site is contributed by Q199.

It belongs to the adenylate kinase family. In terms of assembly, monomer.

Its subcellular location is the cytoplasm. It carries out the reaction AMP + ATP = 2 ADP. It participates in purine metabolism; AMP biosynthesis via salvage pathway; AMP from ADP: step 1/1. Its function is as follows. Catalyzes the reversible transfer of the terminal phosphate group between ATP and AMP. Plays an important role in cellular energy homeostasis and in adenine nucleotide metabolism. The protein is Adenylate kinase of Desulfitobacterium hafniense (strain DSM 10664 / DCB-2).